We begin with the raw amino-acid sequence, 177 residues long: Ribulose bisphosphate carboxylase small subunit, chloroplastic 4 (177 aa).

The transit peptide at 1 to 56 (MASSMMASTAAAVARAGPAQTNMVPFNACRSSVPFPATRKANNDLSTLPSNGGRVS) directs the protein to the chloroplast.

This sequence belongs to the RuBisCO small chain family. Heterohexadecamer of 8 large and 8 small subunits.

The protein resides in the plastid. It localises to the chloroplast. Functionally, ruBisCO catalyzes two reactions: the carboxylation of D-ribulose 1,5-bisphosphate, the primary event in carbon dioxide fixation, as well as the oxidative fragmentation of the pentose substrate. Both reactions occur simultaneously and in competition at the same active site. Although the small subunit is not catalytic it is essential for maximal activity. In Lemna gibba (Swollen duckweed), this protein is Ribulose bisphosphate carboxylase small subunit, chloroplastic 4.